Reading from the N-terminus, the 234-residue chain is Segregation and condensation protein A (234 aa).

This sequence belongs to the ScpA family. As to quaternary structure, component of a cohesin-like complex composed of ScpA, ScpB and the Smc homodimer, in which ScpA and ScpB bind to the head domain of Smc. The presence of the three proteins is required for the association of the complex with DNA.

The protein localises to the cytoplasm. Participates in chromosomal partition during cell division. May act via the formation of a condensin-like complex containing Smc and ScpB that pull DNA away from mid-cell into both cell halves. This chain is Segregation and condensation protein A, found in Streptococcus pyogenes serotype M5 (strain Manfredo).